A 108-amino-acid chain; its full sequence is Dormancy-associated protein homolog 1 (108 aa).

A disordered region spans residues Asp-28–Lys-59. At Ser-47 the chain carries Phosphoserine. Thr-50 bears the Phosphothreonine mark.

Belongs to the DRM1/ARP family. Expressed mainly in the low bolt.

This Arabidopsis thaliana (Mouse-ear cress) protein is Dormancy-associated protein homolog 1.